The primary structure comprises 426 residues: 4-aminobutyrate aminotransferase GabT (426 aa).

Pyridoxal 5'-phosphate contacts are provided by residues 111–112 (GS) and glutamine 242. At lysine 268 the chain carries N6-(pyridoxal phosphate)lysine. Threonine 297 is a pyridoxal 5'-phosphate binding site.

Belongs to the class-III pyridoxal-phosphate-dependent aminotransferase family. In terms of assembly, homotetramer. Requires pyridoxal 5'-phosphate as cofactor.

The enzyme catalyses 4-aminobutanoate + 2-oxoglutarate = succinate semialdehyde + L-glutamate. It catalyses the reaction 5-aminopentanoate + 2-oxoglutarate = 5-oxopentanoate + L-glutamate. It participates in amino-acid degradation; 4-aminobutanoate degradation. It functions in the pathway amino-acid degradation. Pyridoxal phosphate-dependent enzyme that catalyzes transamination between primary amines and alpha-keto acids. Catalyzes the transfer of the amino group from gamma-aminobutyrate (GABA) to alpha-ketoglutarate (KG) to yield succinic semialdehyde (SSA) and glutamate. Thereby functions in a GABA degradation pathway that allows some E.coli strains to utilize GABA as a nitrogen source for growth. Also catalyzes the conversion of 5-aminovalerate to glutarate semialdehyde, as part of a L-lysine degradation pathway that proceeds via cadaverine, glutarate and L-2-hydroxyglutarate. The sequence is that of 4-aminobutyrate aminotransferase GabT (gabT) from Escherichia coli (strain K12).